Here is a 318-residue protein sequence, read N- to C-terminus: Extracellular metalloprotease AO090012001025 (318 aa).

An N-terminal signal peptide occupies residues 1 to 23 (MSHFPTLHILILVIANLQIQCFA). N106, N121, and N193 each carry an N-linked (GlcNAc...) asparagine glycan. Residue H229 coordinates Zn(2+). E230 is a catalytic residue. H233 serves as a coordination point for Zn(2+). A disulfide bridge connects residues C268 and C295.

Belongs to the peptidase M43B family.

The protein localises to the secreted. Functionally, secreted metalloproteinase that allows assimilation of proteinaceous substrates. The sequence is that of Extracellular metalloprotease AO090012001025 from Aspergillus oryzae (strain ATCC 42149 / RIB 40) (Yellow koji mold).